Reading from the N-terminus, the 149-residue chain is D-aminoacyl-tRNA deacylase (149 aa).

Residues 137–138 (GP) carry the Gly-cisPro motif, important for rejection of L-amino acids motif.

It belongs to the DTD family. Homodimer.

It localises to the cytoplasm. It carries out the reaction glycyl-tRNA(Ala) + H2O = tRNA(Ala) + glycine + H(+). It catalyses the reaction a D-aminoacyl-tRNA + H2O = a tRNA + a D-alpha-amino acid + H(+). An aminoacyl-tRNA editing enzyme that deacylates mischarged D-aminoacyl-tRNAs. Also deacylates mischarged glycyl-tRNA(Ala), protecting cells against glycine mischarging by AlaRS. Acts via tRNA-based rather than protein-based catalysis; rejects L-amino acids rather than detecting D-amino acids in the active site. By recycling D-aminoacyl-tRNA to D-amino acids and free tRNA molecules, this enzyme counteracts the toxicity associated with the formation of D-aminoacyl-tRNA entities in vivo and helps enforce protein L-homochirality. The polypeptide is D-aminoacyl-tRNA deacylase (Desulfotalea psychrophila (strain LSv54 / DSM 12343)).